A 180-amino-acid polypeptide reads, in one-letter code: uncharacterized protein (180 aa).

The Nudix hydrolase domain occupies L35–L163. Positions G72–G94 match the Nudix box motif. The Mg(2+) site is built by E88 and E92.

It belongs to the Nudix hydrolase family. The cofactor is Mg(2+).

This is an uncharacterized protein from Shigella flexneri.